A 279-amino-acid chain; its full sequence is Large ribosomal subunit protein uL2 (279 aa).

Disordered regions lie at residues 1–59 (MGIR…GGHK) and 224–279 (VAMN…KNKR). A compositionally biased stretch (basic residues) spans 50–59 (TTRHKGGGHK). A compositionally biased stretch (basic and acidic residues) spans 253–268 (REGRTRRPNKESDKLI). A compositionally biased stretch (basic residues) spans 269–279 (VRRRRTGKNKR).

This sequence belongs to the universal ribosomal protein uL2 family. As to quaternary structure, part of the 50S ribosomal subunit. Forms a bridge to the 30S subunit in the 70S ribosome.

Functionally, one of the primary rRNA binding proteins. Required for association of the 30S and 50S subunits to form the 70S ribosome, for tRNA binding and peptide bond formation. It has been suggested to have peptidyltransferase activity; this is somewhat controversial. Makes several contacts with the 16S rRNA in the 70S ribosome. The sequence is that of Large ribosomal subunit protein uL2 from Pseudarthrobacter chlorophenolicus (strain ATCC 700700 / DSM 12829 / CIP 107037 / JCM 12360 / KCTC 9906 / NCIMB 13794 / A6) (Arthrobacter chlorophenolicus).